Here is a 142-residue protein sequence, read N- to C-terminus: Lysozyme X (142 aa).

Positions 1 to 19 are cleaved as a signal peptide; it reads MRALLGICVLALVTPAVLG. Residues 20–142 enclose the C-type lysozyme domain; that stretch reads RTMDRCSLAR…YLPPIDDCFV (123 aa). Cystine bridges form between Cys-25–Cys-140, Cys-46–Cys-130, Cys-81–Cys-97, and Cys-93–Cys-111. Active-site residues include Glu-51 and Asp-69.

Belongs to the glycosyl hydrolase 22 family. Found in the midgut.

The enzyme catalyses Hydrolysis of (1-&gt;4)-beta-linkages between N-acetylmuramic acid and N-acetyl-D-glucosamine residues in a peptidoglycan and between N-acetyl-D-glucosamine residues in chitodextrins.. Unlikely to play an active role in the humoral immune defense. May have a function in the digestion of bacteria in the food. May be involved in the clearance of bacteria from the larval gut before metamorphosis. The sequence is that of Lysozyme X (LysX) from Drosophila melanogaster (Fruit fly).